Consider the following 26-residue polypeptide: Unknown protein 16 (26 aa).

Positions 1-26 are disordered; the sequence is AINSESGVRSVVPQPCNALPNQGPEK.

The sequence is that of Unknown protein 16 from Pseudotsuga menziesii (Douglas-fir).